A 1356-amino-acid chain; its full sequence is Transmembrane protein 94 (1356 aa).

At 1–64 (MDLKEKHLGE…FLHHSNRCSC (64 aa)) the chain is on the cytoplasmic side. A helical transmembrane segment spans residues 65–85 (FHWPGASLMLLAVLLLLGCCG). Residues 86-92 (GQPAGSR) lie on the Lumenal side of the membrane. A helical transmembrane segment spans residues 93–113 (GVGLVNASALFLLLLLNLVLI). Residues 114-273 (GRQDRLKRRE…RPVTALDNER (160 aa)) lie on the Cytoplasmic side of the membrane. Residues serine 221 and serine 225 each carry the phosphoserine modification. Residues 274–294 (FTVQSVMLHYAVPVVLAGFLI) form a helical membrane-spanning segment. Topologically, residues 295 to 320 (TNALRFIFSAPGVTSWQYTLLQLQVN) are lumenal. Residues 321-341 (GVLPILPLLFPVLWVLATACG) form a helical membrane-spanning segment. The Cytoplasmic segment spans residues 342-1092 (EARVLAQMSK…RHATYGIRKC (751 aa)). Positions 417–422 (DKQGIL) match the DKQGIL motif. Disordered stretches follow at residues 439–461 (VEPP…FCHP) and 483–541 (EQER…ESDP). Positions 440–449 (EPPHSSHEDL) are enriched in basic and acidic residues. Serine 444, serine 445, and serine 454 each carry phosphoserine. Over residues 502-511 (HHKAHGRSKH) the composition is skewed to basic residues. A phosphoserine mark is found at serine 513, serine 518, serine 798, and serine 941. Residues 1093 to 1113 (FLFLLQCQLTLVVIQFLSCLV) traverse the membrane as a helical segment. Residues 1114 to 1120 (QLPPLLS) lie on the Lumenal side of the membrane. Residues 1121–1141 (TTDILWLSCFCYPLLSISLLG) traverse the membrane as a helical segment. Over 1142-1167 (KPPHSSIMSMATGKNLQSIPKKTQHY) the chain is Cytoplasmic. Residues 1168–1188 (FLLCFLLKFSLTISSCLICFG) form a helical membrane-spanning segment. The Lumenal segment spans residues 1189–1228 (FTLQSFCDSSRDRNLTNCSSVMLPSNDDRAPAWFEDFANG). N-linked (GlcNAc...) asparagine glycans are attached at residues asparagine 1202 and asparagine 1205. The chain crosses the membrane as a helical span at residues 1229–1249 (LLSAQKLTAALIVLHTVFISI). Over 1250-1261 (THVHRTKPLWRK) the chain is Cytoplasmic. The chain crosses the membrane as a helical span at residues 1262–1282 (SPLTNLWWAVTVPVVLLGQVV). The Lumenal portion of the chain corresponds to 1283–1306 (QTAVDLQLWTHRDSHVHFGLEDVP). Residues 1307-1327 (LLTWLLGCLSLVLVVVTNEIV) form a helical membrane-spanning segment. Residues 1328 to 1356 (KLHEIRVRVRYQKRQKLQFETKLGMNSPF) lie on the Cytoplasmic side of the membrane. The short motif at 1351 to 1353 (GMN) is the GMN; metal-binding motif element.

As to quaternary structure, forms homooligomers. In terms of tissue distribution, expressed ubiquitously.

The protein resides in the endoplasmic reticulum membrane. Its function is as follows. Could function in the uptake of Mg(2+) from the cytosol into the endoplasmic reticulum and regulate intracellular Mg(2+) homeostasis. The protein is Transmembrane protein 94 of Homo sapiens (Human).